The following is a 162-amino-acid chain: Large ribosomal subunit protein uL10 (162 aa).

The protein belongs to the universal ribosomal protein uL10 family. As to quaternary structure, part of the ribosomal stalk of the 50S ribosomal subunit. The N-terminus interacts with L11 and the large rRNA to form the base of the stalk. The C-terminus forms an elongated spine to which L12 dimers bind in a sequential fashion forming a multimeric L10(L12)X complex.

Its function is as follows. Forms part of the ribosomal stalk, playing a central role in the interaction of the ribosome with GTP-bound translation factors. In Vibrio vulnificus (strain CMCP6), this protein is Large ribosomal subunit protein uL10.